The chain runs to 207 residues: dITP/XTP pyrophosphatase (207 aa).

11 to 16 is a substrate binding site; that stretch reads TGNPGK. Asp72 functions as the Proton acceptor in the catalytic mechanism. Asp72 contributes to the Mg(2+) binding site. Substrate contacts are provided by residues Ser73, 154–157, Lys177, and 182–183; these read FGYD and HR.

It belongs to the HAM1 NTPase family. As to quaternary structure, homodimer. Mg(2+) is required as a cofactor.

It catalyses the reaction XTP + H2O = XMP + diphosphate + H(+). It carries out the reaction dITP + H2O = dIMP + diphosphate + H(+). The enzyme catalyses ITP + H2O = IMP + diphosphate + H(+). Pyrophosphatase that catalyzes the hydrolysis of nucleoside triphosphates to their monophosphate derivatives, with a high preference for the non-canonical purine nucleotides XTP (xanthosine triphosphate), dITP (deoxyinosine triphosphate) and ITP. Seems to function as a house-cleaning enzyme that removes non-canonical purine nucleotides from the nucleotide pool, thus preventing their incorporation into DNA/RNA and avoiding chromosomal lesions. This chain is dITP/XTP pyrophosphatase, found in Thermus thermophilus (strain ATCC BAA-163 / DSM 7039 / HB27).